Consider the following 270-residue polypeptide: MLFHSLIMGLVEGITEFLPISSTGHLILTGDLLGFLDKEKRDVYEIFIQLGAMLAVVWEYRRKIGHTVAGAVRPGGERNLLLGIVIAFIPAAVAGLLFSKQIKAVLFNPVCVAIAFIVGGLIILWAEKREHKVAVETVDDLSLKDALKVGLCQCLALIPGTSRSGATIIGGLFLGLSRKAATEFSFFLGIPTLGAASLYSLIKHRDALSADDIGVFAVGFIASFVFAFLAIRALLRFISTHSFAVFAWYRIAFGLIVLGTWWSGLVNWSA.

6 consecutive transmembrane segments (helical) span residues 79 to 99, 105 to 125, 155 to 175, 182 to 202, 215 to 235, and 242 to 262; these read NLLLGIVIAFIPAAVAGLLFS, VLFNPVCVAIAFIVGGLIILW, LALIPGTSRSGATIIGGLFLG, TEFSFFLGIPTLGAASLYSLI, VFAVGFIASFVFAFLAIRALL, and SFAVFAWYRIAFGLIVLGTWW.

Belongs to the UppP family.

Its subcellular location is the cell inner membrane. The enzyme catalyses di-trans,octa-cis-undecaprenyl diphosphate + H2O = di-trans,octa-cis-undecaprenyl phosphate + phosphate + H(+). In terms of biological role, catalyzes the dephosphorylation of undecaprenyl diphosphate (UPP). Confers resistance to bacitracin. The polypeptide is Undecaprenyl-diphosphatase 1 (Chromobacterium violaceum (strain ATCC 12472 / DSM 30191 / JCM 1249 / CCUG 213 / NBRC 12614 / NCIMB 9131 / NCTC 9757 / MK)).